The sequence spans 358 residues: S-adenosylmethionine:tRNA ribosyltransferase-isomerase (358 aa).

Belongs to the QueA family. In terms of assembly, monomer.

It is found in the cytoplasm. It carries out the reaction 7-aminomethyl-7-carbaguanosine(34) in tRNA + S-adenosyl-L-methionine = epoxyqueuosine(34) in tRNA + adenine + L-methionine + 2 H(+). The protein operates within tRNA modification; tRNA-queuosine biosynthesis. Transfers and isomerizes the ribose moiety from AdoMet to the 7-aminomethyl group of 7-deazaguanine (preQ1-tRNA) to give epoxyqueuosine (oQ-tRNA). The protein is S-adenosylmethionine:tRNA ribosyltransferase-isomerase of Rhodopseudomonas palustris (strain BisA53).